A 753-amino-acid chain; its full sequence is MSSEAKCPFNHAAGGGTTNRDWWPKQLRLDLLSQHSGKSNPLDGGFNYAEAFRSLDLAAVKKDLAALMTDSQDWWPADFGHYGPLFIRMAWHSAGTYRIGDGRGGAGRGQQRFAPLNSWPDNVSLDKARRLLWPIKQKYGQKISWADLLILTGNVALETMGFKTFGFAGGREDTWEPDLDVYWGNEKTWLGGDVRYGKGAAGDNDDGGVIVADEEKHGEEVSRDNSGRNLENPLGAVQMGLIYVNPEGPDGNPDPLAAAHDIRETFARMAMNDEETVALIAGGHTFGKTHGAGPADNVGPEPEAADLENQGLGWKNSFGTGKGADTITSGLEVTWTTTPTKWGNGFFENLFKYEWELTKSPAGAHQWVARDAGETIPHAHDPSKKLRPTMLTTDLSLRFDPVYEKISRRFLENPDQLADAFARAWFKLTHRDMGPRARYLGPEVPAEELNWQDPIPALDHPLVNEQDIASLKQKILASGLSVSQLVSTAWASASTFRGSDKRGGANGARIRLAPQKDWPVNQPEQLAKVLKVLEGIQSEFNGVQSGGKKISLADLIVLGGAAAIEQAAKSAGQQVSVPFSPGRMDASQEQTDVQSVAALEPLADGFRNYLKGKYRAPAEALLIDKAQLLTLTAPEMTVLLGGLRALNVHAGQDSHGVFTHRPQTLSNDFFRNLLDMGTEWKPLSPARDVFEGRDRKTGELKWTGTRVDLVFGSHAQLRALCEVYASEDAQEKFVRDFVAAWAKVMDLDRFEIA.

A cross-link (tryptophyl-tyrosyl-methioninium (Trp-Tyr) (with M-269)) is located at residues 91-243; it reads WHSAGTYRIG…LGAVQMGLIY (153 aa). The Proton acceptor role is filled by histidine 92. Positions 243 to 269 form a cross-link, tryptophyl-tyrosyl-methioninium (Tyr-Met) (with W-91); the sequence is YVNPEGPDGNPDPLAAAHDIRETFARM. Residue histidine 284 coordinates heme b.

This sequence belongs to the peroxidase family. Peroxidase/catalase subfamily. As to quaternary structure, homodimer or homotetramer. Heme b serves as cofactor. In terms of processing, formation of the three residue Trp-Tyr-Met cross-link is important for the catalase, but not the peroxidase activity of the enzyme.

The catalysed reaction is H2O2 + AH2 = A + 2 H2O. It carries out the reaction 2 H2O2 = O2 + 2 H2O. Its function is as follows. Bifunctional enzyme with both catalase and broad-spectrum peroxidase activity. This chain is Catalase-peroxidase, found in Paraburkholderia xenovorans (strain LB400).